The chain runs to 199 residues: dITP/XTP pyrophosphatase (199 aa).

Position 8–13 (8–13) interacts with substrate; it reads TRNKGK. Mg(2+)-binding residues include glutamate 41 and aspartate 70. Residue aspartate 70 is the Proton acceptor of the active site. Residues serine 71, 153-156, lysine 176, and 181-182 each bind substrate; these read FGYD and HR.

It belongs to the HAM1 NTPase family. Homodimer. It depends on Mg(2+) as a cofactor.

It catalyses the reaction XTP + H2O = XMP + diphosphate + H(+). The enzyme catalyses dITP + H2O = dIMP + diphosphate + H(+). It carries out the reaction ITP + H2O = IMP + diphosphate + H(+). Functionally, pyrophosphatase that catalyzes the hydrolysis of nucleoside triphosphates to their monophosphate derivatives, with a high preference for the non-canonical purine nucleotides XTP (xanthosine triphosphate), dITP (deoxyinosine triphosphate) and ITP. Seems to function as a house-cleaning enzyme that removes non-canonical purine nucleotides from the nucleotide pool, thus preventing their incorporation into DNA/RNA and avoiding chromosomal lesions. The protein is dITP/XTP pyrophosphatase of Geobacter sulfurreducens (strain ATCC 51573 / DSM 12127 / PCA).